A 311-amino-acid chain; its full sequence is Phosphoribosylaminoimidazole-succinocarboxamide synthase (311 aa).

It belongs to the SAICAR synthetase family.

The enzyme catalyses 5-amino-1-(5-phospho-D-ribosyl)imidazole-4-carboxylate + L-aspartate + ATP = (2S)-2-[5-amino-1-(5-phospho-beta-D-ribosyl)imidazole-4-carboxamido]succinate + ADP + phosphate + 2 H(+). It participates in purine metabolism; IMP biosynthesis via de novo pathway; 5-amino-1-(5-phospho-D-ribosyl)imidazole-4-carboxamide from 5-amino-1-(5-phospho-D-ribosyl)imidazole-4-carboxylate: step 1/2. The sequence is that of Phosphoribosylaminoimidazole-succinocarboxamide synthase from Aromatoleum aromaticum (strain DSM 19018 / LMG 30748 / EbN1) (Azoarcus sp. (strain EbN1)).